The sequence spans 434 residues: Ribosomal protein uS12 methylthiotransferase RimO (434 aa).

Residues 2-112 (AKIGFVSLGC…VLEAVQVVLP (111 aa)) form the MTTase N-terminal domain. [4Fe-4S] cluster-binding residues include C11, C47, C76, C142, C146, and C149. Residues 128–365 (LTPRHYAYVK…LELQARVSLR (238 aa)) enclose the Radical SAM core domain. A TRAM domain is found at 368–434 (QRFVGKTLEV…DTYDLHGVQA (67 aa)).

This sequence belongs to the methylthiotransferase family. RimO subfamily. Requires [4Fe-4S] cluster as cofactor.

The protein localises to the cytoplasm. It catalyses the reaction L-aspartate(89)-[ribosomal protein uS12]-hydrogen + (sulfur carrier)-SH + AH2 + 2 S-adenosyl-L-methionine = 3-methylsulfanyl-L-aspartate(89)-[ribosomal protein uS12]-hydrogen + (sulfur carrier)-H + 5'-deoxyadenosine + L-methionine + A + S-adenosyl-L-homocysteine + 2 H(+). Functionally, catalyzes the methylthiolation of an aspartic acid residue of ribosomal protein uS12. The polypeptide is Ribosomal protein uS12 methylthiotransferase RimO (Thermus thermophilus (strain ATCC 27634 / DSM 579 / HB8)).